Reading from the N-terminus, the 506-residue chain is UPF0371 protein FN1121 (506 aa).

The protein belongs to the UPF0371 family.

This Fusobacterium nucleatum subsp. nucleatum (strain ATCC 25586 / DSM 15643 / BCRC 10681 / CIP 101130 / JCM 8532 / KCTC 2640 / LMG 13131 / VPI 4355) protein is UPF0371 protein FN1121.